The following is a 536-amino-acid chain: Phosphoenolpyruvate carboxykinase (ATP) (536 aa).

Substrate contacts are provided by Arg-61, Tyr-195, and Lys-201. ATP-binding positions include Lys-201, His-220, and 236–244; that span reads GLSGTGKTT. The Mn(2+) site is built by Lys-201 and His-220. Position 257 (Asp-257) interacts with Mn(2+). Glu-285, Arg-322, and Thr-447 together coordinate ATP. Arg-322 serves as a coordination point for substrate.

Belongs to the phosphoenolpyruvate carboxykinase (ATP) family. Mn(2+) serves as cofactor.

It localises to the cytoplasm. The enzyme catalyses oxaloacetate + ATP = phosphoenolpyruvate + ADP + CO2. It functions in the pathway carbohydrate biosynthesis; gluconeogenesis. Functionally, involved in the gluconeogenesis. Catalyzes the conversion of oxaloacetate (OAA) to phosphoenolpyruvate (PEP) through direct phosphoryl transfer between the nucleoside triphosphate and OAA. This is Phosphoenolpyruvate carboxykinase (ATP) from Sinorhizobium medicae (strain WSM419) (Ensifer medicae).